Consider the following 38-residue polypeptide: Potassium channel toxin alpha-KTx 6.4 (38 aa).

Cystine bridges form between cysteine 6/cysteine 27, cysteine 12/cysteine 32, cysteine 16/cysteine 34, and cysteine 22/cysteine 37.

It belongs to the short scorpion toxin superfamily. Potassium channel inhibitor family. Alpha-KTx 06 subfamily. In terms of tissue distribution, expressed by the venom gland.

It localises to the secreted. Functionally, potently, completely and reversibly blocks voltage-gated potassium channel Kv1.2/KCNA2 and Shaker B (Sh). Also blocks small conductance (SK) calcium-activated potassium channel (KCNN). The sequence is that of Potassium channel toxin alpha-KTx 6.4 from Pandinus imperator (Emperor scorpion).